A 146-amino-acid chain; its full sequence is Hemoglobin subunit beta (146 aa).

The Globin domain maps to His2–His146. Heme b is bound by residues His63 and His92.

It belongs to the globin family. As to quaternary structure, heterotetramer of two alpha chains and two beta chains. As to expression, red blood cells.

In terms of biological role, involved in oxygen transport from the lung to the various peripheral tissues. The protein is Hemoglobin subunit beta (HBB) of Branta canadensis (Canada goose).